The chain runs to 461 residues: MTISVFDLFTIGIGPSSSHTVGPMRAANQFVVALRRRGHLDDLEAMRVDLFGSLAATGAGHGTMSAILLGLEGCQPETITTEHKERRLAEIAASGVTRIGGVIPVPLTERDIDLHPDIVLPTHPNGMTFTAAGPHGRVLATETYFSVGGGFIVTEQTSGNSGQHPCSVALPYVSAQELLDICDRLDVSISEAALRNETCCRTENEVRAALLHLRDVMVECEQRSIAREGLLPGGLRVRRRAKVWYDRLNAEDPTRKPEFAEDWVNLVALAVNEENASGGRVVTAPTNGAAGIVPAVLHYAIHYTSAGAGDPDDVTVRFLLTAGAIGSLFKERASISGAEVGCQGEVGSAAAMAAAGLAEILGGTPRQVENAAEIAMEHSLGLTCDPIAGLVQIPCIERNAISAGKAINAARMALRGDGIHRVTLDQVIDTMRATGADMHTKYKETSAGGLAINVAVNIVEC.

The protein belongs to the iron-sulfur dependent L-serine dehydratase family. The cofactor is [4Fe-4S] cluster.

The enzyme catalyses L-serine = pyruvate + NH4(+). It participates in carbohydrate biosynthesis; gluconeogenesis. The sequence is that of L-serine dehydratase (sdaA) from Mycobacterium bovis (strain ATCC BAA-935 / AF2122/97).